The following is a 1065-amino-acid chain: Putative guanine nucleotide-exchange factor SED4 (1065 aa).

Over 1–346 the chain is Cytoplasmic; that stretch reads MSGNSANYDV…SSSILRNIWK (346 aa). Serine 65 bears the Phosphoserine mark. WD repeat units lie at residues 259-298 and 302-341; these read FDLN…LVQL and VHES…SSIL. The chain crosses the membrane as a helical; Signal-anchor for type II membrane protein span at residues 347-365; that stretch reads FFLNFVLLVVLAGAIQLGY. Over 366–1065 the chain is Lumenal; that stretch reads KHNVHGFIYK…VNYAGLHDEL (700 aa). Asparagine 388 is a glycosylation site (N-linked (GlcNAc...) asparagine). 3 disordered regions span residues 458–477, 482–520, and 551–625; these read TSAD…SSSF, VTNE…SESI, and QSES…SFLD. Positions 465-476 are enriched in low complexity; sequence SASSSSSSSSSS. A compositionally biased stretch (polar residues) spans 482–495; sequence VTNEPIVSSPTSEI. Low complexity predominate over residues 568–621; it reads STESPSLSHMPSSSSSSLSLSSSLTTSPTTALSTSTATAVTTTQTNPTNDAANT. An N-linked (GlcNAc...) asparagine glycan is attached at asparagine 620. 4 repeat units span residues 824–833, 834–843, 844–853, and 854–863. Residues 824–863 are 4 X 10 AA tandem repeats; that stretch reads IDNSEYTSVLADNLEPTSVLADNSEPTSVLADSSEPTSVF. An N-linked (GlcNAc...) asparagine glycan is attached at asparagine 1039. The Prevents secretion from ER signature appears at 1062 to 1065; the sequence is HDEL.

It belongs to the WD repeat SEC12 family.

The protein localises to the endoplasmic reticulum membrane. It localises to the golgi apparatus membrane. In terms of biological role, putative guanine nucleotide-exchange factor (GEF) involved in the formation or budding of transport vesicles from the ER. Positive regulator of SAR1 probably through inhibition of the GTPase activation by SEC23. The sequence is that of Putative guanine nucleotide-exchange factor SED4 (SED4) from Saccharomyces cerevisiae (strain ATCC 204508 / S288c) (Baker's yeast).